The following is a 528-amino-acid chain: Beta-hexosaminidase subunit alpha (528 aa).

An N-terminal signal peptide occupies residues 1–22 (MAGCRLWVSLLLAAALACLATA). Residues 23–88 (LWPWPQYIQT…PRPSFSNKQQ (66 aa)) constitute a propeptide that is removed on maturation. A disulfide bridge links C58 with C104. N-linked (GlcNAc...) asparagine glycosylation is found at N115, N157, and N295. A disulfide bridge links C277 with C328. E323 functions as the Proton donor in the catalytic mechanism. Residues 422–423 (NR) are critical for hydrolysis GM2 gangliosides. The N-linked (GlcNAc...) asparagine glycan is linked to N487. C504 and C521 form a disulfide bridge.

The protein belongs to the glycosyl hydrolase 20 family. There are 3 beta-hexosaminidase isozymes: isozyme A (hexosaminidase A) is a heterodimer composed of one subunit alpha and one subunit beta (chain A and B); isozyme B (hexosaminidase B) is a homodimer of two beta subunits (two chains A and B); isozyme S (hexosaminidase S) is a homodimer of two alpha subunits. The composition of the dimer (isozyme A versus isozyme S) has a significant effect on the substrate specificity of the alpha subunit active site. Ubiquitous. Most abundant in testis, adrenal, epididymis and heart. Low levels seen in the liver.

It is found in the lysosome. It carries out the reaction Hydrolysis of terminal non-reducing N-acetyl-D-hexosamine residues in N-acetyl-beta-D-hexosaminides.. The enzyme catalyses N-acetyl-beta-D-galactosaminyl-(1-&gt;4)-beta-D-3-sulfogalactosyl-(1-&gt;4)-beta-D-glucosyl-(1&lt;-&gt;1')-ceramide + H2O = a beta-D-3-sulfogalactosyl-(1-&gt;4)-beta-D-glucosyl-(1&lt;-&gt;1')-ceramide + N-acetyl-beta-D-galactosamine. The catalysed reaction is a ganglioside GM2 (d18:1(4E)) + H2O = a ganglioside GM3 (d18:1(4E)) + N-acetyl-beta-D-galactosamine. It catalyses the reaction a ganglioside GM2 + H2O = a ganglioside GM3 + N-acetyl-beta-D-galactosamine. It carries out the reaction beta-D-GalNAc-(1-&gt;4)-alpha-L-IdoA-(1-&gt;3)-beta-D-GalNAc-4-sulfate-(1-&gt;4)-alpha-L-IdoA-(1-&gt;3)-D-GalNAc-4-sulfate + H2O = alpha-L-IdoA-(1-&gt;3)-beta-D-GalNAc-4-sulfate-(1-&gt;4)-alpha-L-IdoA-(1-&gt;3)-D-GalNAc-4-sulfate + N-acetyl-D-galactosamine. The enzyme catalyses N-acetyl-beta-D-6-sulfogalactosaminyl-(1-&gt;4)-alpha-L-iduronyl-(1-&gt;3)-N-acetyl-D-6-sulfogalactosamine + H2O = alpha-L-iduronyl-(1-&gt;3)-N-acetyl-D-6-sulfogalactosamine + N-acetyl-D-6-sulfogalactosamine. Addition of GM2A stimulates the hydrolysis of sulfated glycosphingolipid SM2 and the ganglioside GM2. Hydrolyzes the non-reducing end N-acetyl-D-hexosamine and/or sulfated N-acetyl-D-hexosamine of glycoconjugates, such as the oligosaccharide moieties from proteins and neutral glycolipids, or from certain mucopolysaccharides. The isozyme S is as active as the isozyme A on the anionic bis-sulfated glycans, the chondroitin-6-sulfate trisaccharide (C6S-3), and the dermatan sulfate pentasaccharide, and the sulfated glycosphingolipid SM2. The isozyme B does not hydrolyze each of these substrates, however hydrolyzes efficiently neutral oligosaccharide. Only the isozyme A is responsible for the degradation of GM2 gangliosides in the presence of GM2A. The chain is Beta-hexosaminidase subunit alpha from Mus musculus (Mouse).